Consider the following 352-residue polypeptide: Histidinol-phosphate aminotransferase (352 aa).

K208 carries the N6-(pyridoxal phosphate)lysine modification.

This sequence belongs to the class-II pyridoxal-phosphate-dependent aminotransferase family. Histidinol-phosphate aminotransferase subfamily. Homodimer. The cofactor is pyridoxal 5'-phosphate.

It carries out the reaction L-histidinol phosphate + 2-oxoglutarate = 3-(imidazol-4-yl)-2-oxopropyl phosphate + L-glutamate. It functions in the pathway amino-acid biosynthesis; L-histidine biosynthesis; L-histidine from 5-phospho-alpha-D-ribose 1-diphosphate: step 7/9. This chain is Histidinol-phosphate aminotransferase, found in Streptococcus sanguinis (strain SK36).